The chain runs to 520 residues: Acetyltransferase MAT1 (520 aa).

Residues His183 and Asp456 each act as proton acceptor in the active site.

The protein belongs to the plant acyltransferase family.

The protein operates within secondary metabolite biosynthesis. Functionally, acyl-CoA-dependent acyltransferase; part of the gene cluster that mediates the biosynthesis of mannosylerythritol lipids (MELs), surface-active substances that enhance the availability of water-insoluble substrates. Depending on the number of acetyl groups, mannosylerythritol lipids can be differentiated into MEL A (fully acetylated), MEL B and MEL C (monoacetylated at R-6 and R-4, respectively), and the fully deacetylated MEL D. The first step in the pathway is the generation of mannosylerythritol by the glycosyltransferase EMT1 which catalyzes the transfer of GDP-mannose to the C-4 atom of meso-erythritol. This reaction has to be stereospecific, since only mannosyl-D-erythritol is generated. The produced disaccharide is subsequently acylated with fatty acids of various lengths by the acyltransferases MAC1 and MAC2 at positions C-2 and C-3, repectively. The existence of MEL derivatives which carry an acetyl group at C-2 implies that at least MAC1 also accepts acetyl-CoA as a donor. The final step of MEL biosynthesis is the acetylation of the fully acylated mannosylerythritol lipids catalyzed by the acetyl-CoA-dependent acetyltransferase MAT1. MAT1 displays a relaxed regioselectivity and is able to transfer acetylgroups to both positions C-4 and C-6 of the mannosyl moiety. The chain is Acetyltransferase MAT1 from Pseudozyma antarctica (strain T-34) (Yeast).